A 228-amino-acid polypeptide reads, in one-letter code: L-ribulose-5-phosphate 4-epimerase UlaF (228 aa).

Residues 26–27 (GN), 43–44 (SG), and 72–73 (SS) contribute to the substrate site. Asp74, His93, and His95 together coordinate Zn(2+). Asp118 acts as the Proton donor/acceptor in catalysis. Residue His167 coordinates Zn(2+). The active-site Proton donor/acceptor is the Tyr225.

Belongs to the aldolase class II family. AraD/FucA subfamily. Zn(2+) serves as cofactor.

It catalyses the reaction L-ribulose 5-phosphate = D-xylulose 5-phosphate. The protein operates within cofactor degradation; L-ascorbate degradation; D-xylulose 5-phosphate from L-ascorbate: step 4/4. Functionally, catalyzes the isomerization of L-ribulose 5-phosphate to D-xylulose 5-phosphate. Is involved in the anaerobic L-ascorbate utilization. This is L-ribulose-5-phosphate 4-epimerase UlaF from Escherichia coli O6:K15:H31 (strain 536 / UPEC).